A 314-amino-acid chain; its full sequence is Oxaloacetate tautomerase FAHD2B, mitochondrial (314 aa).

A mitochondrion-targeting transit peptide spans Met-1 to Leu-84. Mg(2+) contacts are provided by Glu-159, Glu-161, and Asp-190. Lys-203 bears the N6-acetyllysine; alternate mark. Lys-203 carries the post-translational modification N6-succinyllysine; alternate. Residue Lys-234 is modified to N6-acetyllysine.

It belongs to the FAH family. It depends on Mg(2+) as a cofactor. Mn(2+) serves as cofactor.

It is found in the mitochondrion. It carries out the reaction oxaloacetate = enol-oxaloacetate. Tautomerase that converts enol-oxaloacetate, a strong inhibitor of succinate dehydrogenase, to the physiological keto form of oxaloacetate. It is thereby required to maximize aerobic respiration efficiency by preventing succinate dehydrogenase inhibition. The chain is Oxaloacetate tautomerase FAHD2B, mitochondrial from Bos taurus (Bovine).